The sequence spans 490 residues: Cytochrome P450 71D11 (490 aa).

C427 provides a ligand contact to heme.

The protein belongs to the cytochrome P450 family. Requires heme as cofactor.

This is Cytochrome P450 71D11 (CYP71D11) from Lotus japonicus (Lotus corniculatus var. japonicus).